Here is a 98-residue protein sequence, read N- to C-terminus: Integration host factor subunit alpha (98 aa).

The segment at 51 to 71 (NFDLRDKNERPGRNPKTGEDI) is disordered. Basic and acidic residues predominate over residues 53 to 69 (DLRDKNERPGRNPKTGE).

Belongs to the bacterial histone-like protein family. In terms of assembly, heterodimer of an alpha and a beta chain.

Functionally, this protein is one of the two subunits of integration host factor, a specific DNA-binding protein that functions in genetic recombination as well as in transcriptional and translational control. The sequence is that of Integration host factor subunit alpha from Vibrio cholerae serotype O1 (strain ATCC 39541 / Classical Ogawa 395 / O395).